A 458-amino-acid chain; its full sequence is Bifunctional protein GlmU (458 aa).

Residues 1-229 (MKEKALSIVI…FMEVEGVNNR (229 aa)) are pyrophosphorylase. Residues 11 to 14 (LAAG), Lys25, Gln76, 81 to 82 (GT), 103 to 105 (YGD), Gly140, Glu154, Asn169, and Asn227 contribute to the UDP-N-acetyl-alpha-D-glucosamine site. Residue Asp105 coordinates Mg(2+). Residue Asn227 participates in Mg(2+) binding. The linker stretch occupies residues 230 to 250 (QQLARLERYYQRKQADNLLLA). An N-acetyltransferase region spans residues 251 to 458 (GVALADPERF…WQRPTKQTKK (208 aa)). Arg333 and Lys351 together coordinate UDP-N-acetyl-alpha-D-glucosamine. His363 serves as the catalytic Proton acceptor. Residues Tyr366 and Asn377 each contribute to the UDP-N-acetyl-alpha-D-glucosamine site. Residues Ala380, 386–387 (NY), Ser405, Ala423, and Arg440 contribute to the acetyl-CoA site.

It in the N-terminal section; belongs to the N-acetylglucosamine-1-phosphate uridyltransferase family. In the C-terminal section; belongs to the transferase hexapeptide repeat family. Homotrimer. Mg(2+) is required as a cofactor.

It is found in the cytoplasm. The enzyme catalyses alpha-D-glucosamine 1-phosphate + acetyl-CoA = N-acetyl-alpha-D-glucosamine 1-phosphate + CoA + H(+). It catalyses the reaction N-acetyl-alpha-D-glucosamine 1-phosphate + UTP + H(+) = UDP-N-acetyl-alpha-D-glucosamine + diphosphate. It participates in nucleotide-sugar biosynthesis; UDP-N-acetyl-alpha-D-glucosamine biosynthesis; N-acetyl-alpha-D-glucosamine 1-phosphate from alpha-D-glucosamine 6-phosphate (route II): step 2/2. Its pathway is nucleotide-sugar biosynthesis; UDP-N-acetyl-alpha-D-glucosamine biosynthesis; UDP-N-acetyl-alpha-D-glucosamine from N-acetyl-alpha-D-glucosamine 1-phosphate: step 1/1. The protein operates within bacterial outer membrane biogenesis; LPS lipid A biosynthesis. Catalyzes the last two sequential reactions in the de novo biosynthetic pathway for UDP-N-acetylglucosamine (UDP-GlcNAc). The C-terminal domain catalyzes the transfer of acetyl group from acetyl coenzyme A to glucosamine-1-phosphate (GlcN-1-P) to produce N-acetylglucosamine-1-phosphate (GlcNAc-1-P), which is converted into UDP-GlcNAc by the transfer of uridine 5-monophosphate (from uridine 5-triphosphate), a reaction catalyzed by the N-terminal domain. This is Bifunctional protein GlmU from Pasteurella multocida (strain Pm70).